Reading from the N-terminus, the 303-residue chain is Probable cell division protein WhiA (303 aa).

A DNA-binding region (H-T-H motif) is located at residues 272–303; that stretch reads SIQQVADALEFPITKSGVNHRLRKINKIADDL.

The protein belongs to the WhiA family.

Involved in cell division and chromosome segregation. This Streptococcus pyogenes serotype M3 (strain ATCC BAA-595 / MGAS315) protein is Probable cell division protein WhiA.